The following is a 313-amino-acid chain: E3 ubiquitin-protein ligase RNF126 (313 aa).

A2 carries the post-translational modification N-acetylalanine. S5 carries the phosphoserine modification. Residues 5-101 (SPQPGRYFCH…FEIPTFPPGA (97 aa)) form a required for interaction with BAG6 region. The Zn(2+) site is built by C13, C16, C29, and C32. The segment at 13-32 (CHCCSVEIVPRLPDYICPRC) adopts a C4-type zinc-finger fold. Disordered regions lie at residues 42–64 (EETRSAENGSAPSTASADQSRQQ) and 96–128 (TFPPGAQADDSRDPESRREREQHSRHRYGARQP). Residues 47 to 64 (AENGSAPSTASADQSRQQ) are compositionally biased toward polar residues. Positions 104–117 (DDSRDPESRREREQ) are enriched in basic and acidic residues. Over residues 118–128 (HSRHRYGARQP) the composition is skewed to basic residues. The tract at residues 203 to 306 (TGPPPADKEK…SSSSSSSPGN (104 aa)) is sufficient for interaction with AICDA. An RING-type zinc finger spans residues 232 to 273 (CPVCKDDYGLGEHVRQLPCNHLFHDGCIVPWLEQHDSCPVCR). Residues 280 to 313 (NTATDPPGLAGVSFSSSSSSSSSSPGNENPASSS) form a disordered region. The span at 292–313 (SFSSSSSSSSSSPGNENPASSS) shows a compositional bias: low complexity.

As to quaternary structure, interacts with CCDC50, EGFR, FLT3 and SCAMP3. Interacts with BAG6 (via ubiquitin-like domain); required for BAG6-dependent ubiquitination of proteins mislocalized to the cytosol. Interacts with CDKN1A. Interacts with AICDA. In terms of processing, ubiquitinated. May undergo autoubiquitination.

Its subcellular location is the cytoplasm. The protein localises to the nucleus. The enzyme catalyses S-ubiquitinyl-[E2 ubiquitin-conjugating enzyme]-L-cysteine + [acceptor protein]-L-lysine = [E2 ubiquitin-conjugating enzyme]-L-cysteine + N(6)-ubiquitinyl-[acceptor protein]-L-lysine.. Its pathway is protein modification; protein ubiquitination. In terms of biological role, E3 ubiquitin-protein ligase that mediates ubiquitination oF target proteins. Depending on the associated E2 ligase, mediates 'Lys-27'-, 'Lys-29'-, 'Lys-48'- and/or 'Lys-63'-linked polyubiquitination of substrates. Part of a BAG6-dependent quality control process ensuring that proteins of the secretory pathway that are mislocalized to the cytosol are degraded by the proteasome. Probably acts by providing the ubiquitin ligase activity associated with the BAG6 complex and be responsible for ubiquitination of the hydrophobic mislocalized proteins and their targeting to the proteasome. May also play a role in the endosomal recycling of IGF2R, the cation-independent mannose-6-phosphate receptor. May play a role in the endosomal sorting and degradation of several membrane receptors including EGFR, FLT3, MET and CXCR4, by mediating their ubiquitination. By ubiquitinating CDKN1A/p21 and targeting it for degradation, may also promote cell proliferation. May monoubiquitinate AICDA. Acts as a regulator of DNA repair by mediating 'Lys-27'- and 'Lys-29'-linked polyubiquitination of MRE11, thereby promoting the exonuclease activity of MRE11. This chain is E3 ubiquitin-protein ligase RNF126, found in Bos taurus (Bovine).